We begin with the raw amino-acid sequence, 62 residues long: Large ribosomal subunit protein bL28 (62 aa).

The tract at residues 1-23 (MGKQCYVTGRKASTGNRRSHALN) is disordered.

Belongs to the bacterial ribosomal protein bL28 family.

The chain is Large ribosomal subunit protein bL28 from Staphylococcus carnosus (strain TM300).